The primary structure comprises 291 residues: ADP-dependent (S)-NAD(P)H-hydrate dehydratase (291 aa).

The 269-residue stretch at 5-273 (SKDILEEVIT…QALPTYMKKY (269 aa)) folds into the YjeF C-terminal domain. Residues alanine 40, glycine 103, and histidine 153 each coordinate (6S)-NADPHX. Residue glycine 215 coordinates AMP. Aspartate 216 contributes to the (6S)-NADPHX binding site.

It belongs to the NnrD/CARKD family. As to quaternary structure, homotetramer. Mg(2+) is required as a cofactor.

It carries out the reaction (6S)-NADHX + ADP = AMP + phosphate + NADH + H(+). The enzyme catalyses (6S)-NADPHX + ADP = AMP + phosphate + NADPH + H(+). Catalyzes the dehydration of the S-form of NAD(P)HX at the expense of ADP, which is converted to AMP. Together with NAD(P)HX epimerase, which catalyzes the epimerization of the S- and R-forms, the enzyme allows the repair of both epimers of NAD(P)HX, a damaged form of NAD(P)H that is a result of enzymatic or heat-dependent hydration. The sequence is that of ADP-dependent (S)-NAD(P)H-hydrate dehydratase from Enterococcus faecalis (strain ATCC 700802 / V583).